A 334-amino-acid polypeptide reads, in one-letter code: UDP-N-acetylglucosamine--N-acetylmuramyl-(pentapeptide) pyrophosphoryl-undecaprenol N-acetylglucosamine transferase (334 aa).

Residues 11–13 (TGG), asparagine 125, serine 185, isoleucine 229, and glutamine 274 each bind UDP-N-acetyl-alpha-D-glucosamine.

The protein belongs to the glycosyltransferase 28 family. MurG subfamily.

It is found in the cell inner membrane. The catalysed reaction is di-trans,octa-cis-undecaprenyl diphospho-N-acetyl-alpha-D-muramoyl-L-alanyl-D-glutamyl-meso-2,6-diaminopimeloyl-D-alanyl-D-alanine + UDP-N-acetyl-alpha-D-glucosamine = di-trans,octa-cis-undecaprenyl diphospho-[N-acetyl-alpha-D-glucosaminyl-(1-&gt;4)]-N-acetyl-alpha-D-muramoyl-L-alanyl-D-glutamyl-meso-2,6-diaminopimeloyl-D-alanyl-D-alanine + UDP + H(+). It functions in the pathway cell wall biogenesis; peptidoglycan biosynthesis. In terms of biological role, cell wall formation. Catalyzes the transfer of a GlcNAc subunit on undecaprenyl-pyrophosphoryl-MurNAc-pentapeptide (lipid intermediate I) to form undecaprenyl-pyrophosphoryl-MurNAc-(pentapeptide)GlcNAc (lipid intermediate II). The chain is UDP-N-acetylglucosamine--N-acetylmuramyl-(pentapeptide) pyrophosphoryl-undecaprenol N-acetylglucosamine transferase from Thermosipho africanus (strain TCF52B).